We begin with the raw amino-acid sequence, 367 residues long: Polygalacturonase (367 aa).

Positions 1–18 (MRTSFVTMLALGAAAVSA) are cleaved as a signal peptide. A disulfide bridge connects residues Cys-34 and Cys-49. PbH1 repeat units lie at residues 161–191 (ADRLTLDHITIDNSEGDAKGGHNTDAFDVGS), 192–213 (STFITISNANIKNQDDCLAINS), 214–234 (GSNIKFVGGTCSGGHGISIGS), 243–264 (VKDVTISDSTVINSDNGVRVKT), and 272–294 (VSGVTFSNIKLSNIAKYGIVIEQ). Asp-206 serves as the catalytic Proton donor. Cys-208 and Cys-224 are disulfide-bonded. His-228 is a catalytic residue. Asn-318 and Asn-336 each carry an N-linked (GlcNAc...) asparagine glycan. Cystine bridges form between Cys-334–Cys-339 and Cys-358–Cys-367.

This sequence belongs to the glycosyl hydrolase 28 family.

It localises to the secreted. The enzyme catalyses (1,4-alpha-D-galacturonosyl)n+m + H2O = (1,4-alpha-D-galacturonosyl)n + (1,4-alpha-D-galacturonosyl)m.. This Penicillium digitatum (Green mold) protein is Polygalacturonase (PG1).